The primary structure comprises 450 residues: Phosphoglucosamine mutase (450 aa).

Ser-103 (phosphoserine intermediate) is an active-site residue. Positions 103, 243, 245, and 247 each coordinate Mg(2+). Ser-103 carries the post-translational modification Phosphoserine.

Belongs to the phosphohexose mutase family. It depends on Mg(2+) as a cofactor. Post-translationally, activated by phosphorylation.

The catalysed reaction is alpha-D-glucosamine 1-phosphate = D-glucosamine 6-phosphate. In terms of biological role, catalyzes the conversion of glucosamine-6-phosphate to glucosamine-1-phosphate. This Lactobacillus helveticus (strain DPC 4571) protein is Phosphoglucosamine mutase.